A 447-amino-acid polypeptide reads, in one-letter code: Coagulation factor VII (447 aa).

The first 23 residues, 1 to 23 (MLSQAWALALLCFLLSLWGSLPA), serve as a signal peptide directing secretion. Residues 24-40 (VFLPQEQALSILHRPRR) constitute a propeptide that is removed on maturation. Residues 41-85 (ANGFLEELLPGSLERECREELCSFEEAHEIFRNEERTRQFWVSYN) form the Gla domain. 11 positions are modified to 4-carboxyglutamate: Glu46, Glu47, Glu54, Glu56, Glu59, Glu60, Glu65, Glu66, Glu69, Glu74, and Glu75. Residues Cys57 and Cys62 are joined by a disulfide bond. One can recognise an EGF-like 1; calcium-binding domain in the interval 86-122 (DGDQCASSPCQNGGSCEDQLRSYICFCPDGFEGRNCE). 10 disulfide bridges follow: Cys90/Cys101, Cys95/Cys110, Cys112/Cys121, Cys131/Cys142, Cys138/Cys152, Cys154/Cys167, Cys175/Cys302, Cys199/Cys204, Cys218/Cys234, and Cys350/Cys369. O-linked (Glc...) serine glycosylation is present at Ser92. Ser92 carries an O-linked (Glc...) serine; alternate glycan. Residue Ser92 is glycosylated (O-linked (Xyl...) serine; alternate). O-linked (Fuc) serine glycosylation is present at Ser100. In terms of domain architecture, EGF-like 2 spans 127 to 168 (SQLICANDNGGCEQYCGADPGAGRFCWCHEGYALQADGVSCA). N-linked (GlcNAc...) asparagine glycosylation is present at Asn185. Residues 193–432 (IVGGHVCPKG…YTAWLRQLMG (240 aa)) form the Peptidase S1 domain. The Charge relay system role is filled by His233. N-linked (GlcNAc...) asparagine glycosylation is present at Asn243. Asp282 acts as the Charge relay system in catalysis. Residue Asp378 coordinates substrate. Residues Cys380 and Cys408 are joined by a disulfide bond. Ser384 (charge relay system) is an active-site residue.

It belongs to the peptidase S1 family. As to quaternary structure, heterodimer of a light chain and a heavy chain linked by a disulfide bond. Post-translationally, the vitamin K-dependent, enzymatic carboxylation of some glutamate residues allows the modified protein to bind calcium. O-glycosylated. O-fucosylated by POFUT1 on a conserved serine or threonine residue found in the consensus sequence C2-X(4,5)-[S/T]-C3 of EGF domains, where C2 and C3 are the second and third conserved cysteines. In terms of processing, can be either O-glucosylated or O-xylosylated at Ser-92 by POGLUT1. As to expression, plasma.

The protein localises to the secreted. It catalyses the reaction Selective cleavage of Arg-|-Ile bond in factor X to form factor Xa.. Initiates the extrinsic pathway of blood coagulation. Serine protease that circulates in the blood in a zymogen form. Factor VII is converted to factor VIIa by factor Xa, factor XIIa, factor IXa, or thrombin by minor proteolysis. In the presence of tissue factor and calcium ions, factor VIIa then converts factor X to factor Xa by limited proteolysis. Factor VIIa also converts factor IX to factor IXa in the presence of tissue factor and calcium. The protein is Coagulation factor VII (F7) of Bos taurus (Bovine).